The chain runs to 186 residues: uncharacterized protein (186 aa).

3 helical membrane passes run 43 to 63, 69 to 89, and 143 to 163; these read GAWV…HAIP, LAWT…FHWV, and WMFL…LPAV.

It is found in the endoplasmic reticulum membrane. This is an uncharacterized protein from Schizosaccharomyces pombe (strain 972 / ATCC 24843) (Fission yeast).